Here is a 151-residue protein sequence, read N- to C-terminus: Large ribosomal subunit protein uL22 (151 aa).

The tract at residues 1 to 25 (MARINYSVKEDPETTSKAMGSELHI) is disordered.

Belongs to the universal ribosomal protein uL22 family. In terms of assembly, part of the 50S ribosomal subunit.

This protein binds specifically to 23S rRNA. It makes multiple contacts with different domains of the 23S rRNA in the assembled 50S subunit and ribosome. Functionally, the globular domain of the protein is located near the polypeptide exit tunnel on the outside of the subunit, while an extended beta-hairpin is found that lines the wall of the exit tunnel in the center of the 70S ribosome. This is Large ribosomal subunit protein uL22 from Methanosarcina barkeri (strain Fusaro / DSM 804).